Consider the following 54-residue polypeptide: uncharacterized protein (54 aa).

Residues 1–54 (MSKKSTPMTKDAASRIQSSAAKSGGDVSSGSFASRAQSAAAINANNTSNSTGKK) form a disordered region. The segment covering 28–54 (SSGSFASRAQSAAAINANNTSNSTGKK) has biased composition (low complexity).

This is an uncharacterized protein from Dictyostelium discoideum (Social amoeba).